The sequence spans 258 residues: Chaperone protein FaeE (258 aa).

An N-terminal signal peptide occupies residues 1–34 (MSKRNAVTTFFTNRVTKALGMTLALMMTCQSAMA). The tract at residues 239–258 (KKPAAPEAAKAEKADTAEQK) is disordered. The segment covering 247–258 (AKAEKADTAEQK) has biased composition (basic and acidic residues).

This sequence belongs to the periplasmic pilus chaperone family.

It is found in the periplasm. Its function is as follows. Mediates assembly of pili by forming soluble multimeric complexes with pili subunits as an intermediate step in the assembly process. This protein is involved in K88 pili assembly. Protects pilin protein from proteolytic degradation by DegP and from premature polymerization. The chain is Chaperone protein FaeE (faeE) from Escherichia coli.